Consider the following 701-residue polypeptide: Long chain acyl-CoA synthetase 6, peroxisomal (701 aa).

A propeptide spans Met-1–Thr-38 (removed in mature form). The Microbody targeting signal motif lies at Arg-15–Leu-23. Ile-266 to Lys-277 serves as a coordination point for ATP. The fatty acid-binding stretch occupies residues Asp-526–Lys-550.

Belongs to the ATP-dependent AMP-binding enzyme family. Mg(2+) serves as cofactor. In terms of tissue distribution, expressed in roots, stems, leaves flowers and germinating seedling. Preferentially expressed in seeds and senescent leaves.

The protein resides in the peroxisome. It is found in the glyoxysome membrane. It carries out the reaction a long-chain fatty acid + ATP + CoA = a long-chain fatty acyl-CoA + AMP + diphosphate. The catalysed reaction is tetradecanoate + ATP + CoA = tetradecanoyl-CoA + AMP + diphosphate. The enzyme catalyses hexadecanoate + ATP + CoA = hexadecanoyl-CoA + AMP + diphosphate. It catalyses the reaction (9Z)-octadecenoate + ATP + CoA = (9Z)-octadecenoyl-CoA + AMP + diphosphate. It carries out the reaction (9Z,12Z)-octadecadienoate + ATP + CoA = (9Z,12Z)-octadecadienoyl-CoA + AMP + diphosphate. The catalysed reaction is (9Z,12Z,15Z)-octadecatrienoate + ATP + CoA = (9Z,12Z,15Z)-octadecatrienoyl-CoA + AMP + diphosphate. Its pathway is lipid metabolism; fatty acid metabolism. In terms of biological role, activation of long-chain fatty acids for both synthesis of cellular lipids, and degradation via beta-oxidation. Preferentially uses palmitate, palmitoleate, oleate, linoleate and eicosenoate as substrates. Can use myristate and linolenate as substrates. May play a regulatory role both in fatty acid import into glyoxysomes and in fatty acid beta-oxidation. Functions redundantly with LACS7 in lipid mobilization for beta-oxidation during seed germination, which is essential for postgerminative growth and seedling establishment. The polypeptide is Long chain acyl-CoA synthetase 6, peroxisomal (Arabidopsis thaliana (Mouse-ear cress)).